Consider the following 296-residue polypeptide: 4-diphosphocytidyl-2-C-methyl-D-erythritol kinase (296 aa).

Lys18 is a catalytic residue. 102–112 (PMGGGIGGGSS) contacts ATP. Residue Asp144 is part of the active site.

The protein belongs to the GHMP kinase family. IspE subfamily.

It carries out the reaction 4-CDP-2-C-methyl-D-erythritol + ATP = 4-CDP-2-C-methyl-D-erythritol 2-phosphate + ADP + H(+). It participates in isoprenoid biosynthesis; isopentenyl diphosphate biosynthesis via DXP pathway; isopentenyl diphosphate from 1-deoxy-D-xylulose 5-phosphate: step 3/6. Its function is as follows. Catalyzes the phosphorylation of the position 2 hydroxy group of 4-diphosphocytidyl-2C-methyl-D-erythritol. The chain is 4-diphosphocytidyl-2-C-methyl-D-erythritol kinase from Vibrio atlanticus (strain LGP32) (Vibrio splendidus (strain Mel32)).